The chain runs to 325 residues: Lipid droplet-associated hydrolase (325 aa).

Catalysis depends on Ser-139, which acts as the Nucleophile. Residues Asp-271 and His-300 each act as charge relay system in the active site.

The protein belongs to the AB hydrolase superfamily. LDAH family.

It is found in the lipid droplet. It localises to the endoplasmic reticulum. The enzyme catalyses a cholesterol ester + H2O = cholesterol + a fatty acid + H(+). Its function is as follows. Probable serine lipid hydrolase associated with lipid droplets. Has low cholesterol esterase activity. Appears to lack triglyceride lipase activity. Involved in cholesterol and triglyceride homeostasis; stimulates cellular triglyceride accumulation and cellular cholesterol release. Acts antagonistically with PNPLA2/ATGL in regulation of cellular lipid stores. May regulate triglyceride accumulation indirectly through stimulation of PNPLA2/ATGL ubiquitination and proteasomal degradation. Promotes microtubule-dependent lipid droplet fusion. Highly expressed in macrophage-rich areas in atherosclerotic lesions, suggesting that it could promote cholesterol ester turnover in macrophages. The polypeptide is Lipid droplet-associated hydrolase (Pongo abelii (Sumatran orangutan)).